We begin with the raw amino-acid sequence, 290 residues long: 33 kDa chaperonin (290 aa).

2 disulfide bridges follow: C235/C237 and C268/C271.

It belongs to the HSP33 family. Post-translationally, under oxidizing conditions two disulfide bonds are formed involving the reactive cysteines. Under reducing conditions zinc is bound to the reactive cysteines and the protein is inactive.

The protein localises to the cytoplasm. Its function is as follows. Redox regulated molecular chaperone. Protects both thermally unfolding and oxidatively damaged proteins from irreversible aggregation. Plays an important role in the bacterial defense system toward oxidative stress. In Streptococcus pyogenes serotype M6 (strain ATCC BAA-946 / MGAS10394), this protein is 33 kDa chaperonin.